Reading from the N-terminus, the 977-residue chain is Poly [ADP-ribose] polymerase 1 (977 aa).

2 PARP-type zinc fingers span residues 8–91 (WKAE…GSAP) and 104–179 (CTIE…KKDA). Zn(2+)-binding residues include cysteine 20, cysteine 23, histidine 52, cysteine 55, cysteine 116, cysteine 119, histidine 141, and cysteine 144. Disordered regions lie at residues 177-199 (KDAP…QNDI) and 218-237 (DKGK…DLQE). The PADR1 zinc-binding domain occupies 227–365 (DSNANSSDLQ…AKKPERVLPP (139 aa)). Residues 254-288 (KKHVSTAELRNMLEANGQDTSGPERHLLDRCADGM) enclose the SAP domain. A zinc ribbon region spans residues 291-335 (GALGTCPVCSSFLYYHGGQYHCSGYVSEWSKCTYSTTEPVRSKKK). Residues cysteine 296, cysteine 299, cysteine 312, and cysteine 322 each coordinate Zn(2+). Residues 381–473 (SFLSEGLDKL…RVLPFDLYKV (93 aa)) enclose the BRCT domain. The 101-residue stretch at 504-604 (TGHILEDGKS…TNFQKQPGKF (101 aa)) folds into the WGR domain. The 120-residue stretch at 626–745 (KSSLPPQLLE…DIEIASKLVG (120 aa)) folds into the PARP alpha-helical domain. The region spanning 752–977 (ESLDDKYKKL…LLKVRFHHKR (226 aa)) is the PARP catalytic domain.

This sequence belongs to the ARTD/PARP family.

It is found in the nucleus. The enzyme catalyses NAD(+) + (ADP-D-ribosyl)n-acceptor = nicotinamide + (ADP-D-ribosyl)n+1-acceptor + H(+).. It catalyses the reaction L-aspartyl-[protein] + NAD(+) = 4-O-(ADP-D-ribosyl)-L-aspartyl-[protein] + nicotinamide. The catalysed reaction is L-glutamyl-[protein] + NAD(+) = 5-O-(ADP-D-ribosyl)-L-glutamyl-[protein] + nicotinamide. Functionally, involved in the base excision repair (BER) pathway, by catalyzing the poly(ADP-ribosyl)ation of a limited number of acceptor proteins involved in chromatin architecture and in DNA metabolism. This modification follows DNA damages and appears as an obligatory step in a detection/signaling pathway leading to the reparation of DNA strand breaks. The polypeptide is Poly [ADP-ribose] polymerase 1 (PARP1) (Oryza sativa subsp. japonica (Rice)).